Reading from the N-terminus, the 756-residue chain is 1,4-alpha-glucan branching enzyme GlgB (756 aa).

D431 (nucleophile) is an active-site residue. The active-site Proton donor is E484.

This sequence belongs to the glycosyl hydrolase 13 family. GlgB subfamily. In terms of assembly, monomer.

It catalyses the reaction Transfers a segment of a (1-&gt;4)-alpha-D-glucan chain to a primary hydroxy group in a similar glucan chain.. It functions in the pathway glycan biosynthesis; glycogen biosynthesis. Functionally, catalyzes the formation of the alpha-1,6-glucosidic linkages in glycogen by scission of a 1,4-alpha-linked oligosaccharide from growing alpha-1,4-glucan chains and the subsequent attachment of the oligosaccharide to the alpha-1,6 position. The protein is 1,4-alpha-glucan branching enzyme GlgB of Prochlorococcus marinus (strain MIT 9303).